The sequence spans 301 residues: uncharacterized protein (301 aa).

It belongs to the asfivirus E301R family. Interacts with host IRF3.

Plays a role in the inhibition of host innate immune system by acting as a negatively regulator of type I interferon production. Mechanistically, interacts with and prevents host IRF3 nuclear localization to inhibit its transcriptional activity. This is an uncharacterized protein from African swine fever virus (isolate Warthog/Namibia/Wart80/1980) (ASFV).